The chain runs to 568 residues: Phosphoprotein (568 aa).

Residues 1–24 (MDQDAFFFERDPEAEGEAPRKQES) are disordered. Residues 7–23 (FFERDPEAEGEAPRKQE) show a composition bias toward basic and acidic residues. The N0 binding stretch occupies residues 33–41 (DVVLSYKPT). The disordered stretch occupies residues 45-324 (EDRSWLHGII…ANEEETSNTS (280 aa)). Residues 58–105 (EENKPSCKADDNNKDRAISTPTQDHRSGEESGISRRTSESKTETHARL) are compositionally biased toward basic and acidic residues. Positions 107–121 (DQQSIHRASRRGTSP) are enriched in polar residues. Basic and acidic residues-rich tracts occupy residues 132–144 (RNTR…PNER) and 151–167 (LTDE…KREE). The span at 190–208 (RTNNNGRSMETSSTHSTRI) shows a compositional bias: polar residues. The segment covering 239–253 (TRSERTQNSELHKST) has biased composition (basic and acidic residues). A compositionally biased stretch (polar residues) spans 294-305 (YTMNNANNNTKS). The interval 344–411 (FELSRSASHV…SSRDLHKRFS (68 aa)) is multimerization. Residues 387–416 (EENRTLLKQIQEEINSSRDLHKRFSEYQKE) are a coiled coil. Residues 412 to 445 (EYQKEQNSLMMANLSTLHIITDRGGKTGDPSDTT) are l protein binding. The disordered stretch occupies residues 434–455 (RGGKTGDPSDTTRSPSVFTKGK). Over residues 441 to 450 (PSDTTRSPSV) the composition is skewed to polar residues. Residues 479–568 (DLIREDELRD…FEEDIDSLTN (90 aa)) form an interaction with the nucleocapsid (N-RNA) region.

It belongs to the respirovirus P protein family. As to quaternary structure, homotetramer. Interacts (via multimerization domain) with polymerase L; this interaction forms the polymerase complex. Interacts (via N-terminus) with N0; this interaction allows P to chaperon N0 before encapsidation and form the N-P complex. Interacts (via C-terminus) with N-RNA template; this interaction positions the polymerase on the template.

Essential cofactor of the RNA polymerase L that plays a central role in the transcription and replication by forming the polymerase complex with RNA polymerase L and recruiting L to the genomic N-RNA template for RNA synthesis. Also plays a central role in the encapsidation of nascent RNA chains by forming the encapsidation complex with the nucleocapsid protein N (N-P complex). Acts as a chaperone for newly synthesized free N protein, so-called N0, allowing encapsidation of nascent RNA chains during replication. The nucleoprotein protein N prevents excessive phosphorylation of P, which leads to down-regulation of viral transcription/ replication. Participates, together with N, in the formation of viral factories (viroplasms), which are large inclusions in the host cytoplasm where replication takes place. Recruits host PI4KB and remodel the host endoplasmic reticulum membrane to form viral replication factories. This chain is Phosphoprotein (P/C), found in Human parainfluenza 1 virus (strain C39) (HPIV-1).